Consider the following 527-residue polypeptide: Bifunctional purine biosynthesis protein PurH (527 aa).

An MGS-like domain is found at 1–144; it reads MNRRALISVS…KNHESVAIIV (144 aa).

It belongs to the PurH family.

It catalyses the reaction (6R)-10-formyltetrahydrofolate + 5-amino-1-(5-phospho-beta-D-ribosyl)imidazole-4-carboxamide = 5-formamido-1-(5-phospho-D-ribosyl)imidazole-4-carboxamide + (6S)-5,6,7,8-tetrahydrofolate. The catalysed reaction is IMP + H2O = 5-formamido-1-(5-phospho-D-ribosyl)imidazole-4-carboxamide. The protein operates within purine metabolism; IMP biosynthesis via de novo pathway; 5-formamido-1-(5-phospho-D-ribosyl)imidazole-4-carboxamide from 5-amino-1-(5-phospho-D-ribosyl)imidazole-4-carboxamide (10-formyl THF route): step 1/1. Its pathway is purine metabolism; IMP biosynthesis via de novo pathway; IMP from 5-formamido-1-(5-phospho-D-ribosyl)imidazole-4-carboxamide: step 1/1. The chain is Bifunctional purine biosynthesis protein PurH from Heliobacterium modesticaldum (strain ATCC 51547 / Ice1).